Reading from the N-terminus, the 721-residue chain is Polyribonucleotide nucleotidyltransferase (721 aa).

2 residues coordinate Mg(2+): Asp495 and Asp501. The 60-residue stretch at 562-621 folds into the KH domain; it reads PRLLSFRIDPELIGTVIGPGGRTIKGITERTNTKIDIEDSGIVTIASHDGAAADEAQKII. Residues 631–699 enclose the S1 motif domain; it reads GEVFSGAITR…NRGRINLTLR (69 aa). A disordered region spans residues 700-721; it reads GVPQNGEEAEPAPAPTPVAPLN. A compositionally biased stretch (pro residues) spans 711–721; that stretch reads APAPTPVAPLN.

This sequence belongs to the polyribonucleotide nucleotidyltransferase family. Mg(2+) serves as cofactor.

The protein resides in the cytoplasm. It carries out the reaction RNA(n+1) + phosphate = RNA(n) + a ribonucleoside 5'-diphosphate. Functionally, involved in mRNA degradation. Catalyzes the phosphorolysis of single-stranded polyribonucleotides processively in the 3'- to 5'-direction. This Synechococcus sp. (strain WH7803) protein is Polyribonucleotide nucleotidyltransferase.